We begin with the raw amino-acid sequence, 415 residues long: Erythronolide mycarosyltransferase (415 aa).

It belongs to the glycosyltransferase 28 family.

It catalyses the reaction dTDP-beta-L-mycarose + erythronolide B = 3-O-alpha-L-mycarosylerythronolide B + dTDP + H(+). Its function is as follows. Involved in the biosynthesis of the macrolide antibiotic erythromycin. Catalyzes the reversible transfer of mycarosyl from dTDP-beta-L-mycarose to erythronolide B to yield 3-alpha-L-mycarosylerythronolide B. It can also use TDP-beta-L-cladinose. This chain is Erythronolide mycarosyltransferase, found in Saccharopolyspora erythraea (Streptomyces erythraeus).